Reading from the N-terminus, the 84-residue chain is Large ribosomal subunit protein bL27 (84 aa).

The disordered stretch occupies residues 1–21 (MAHKKGGGSTKNGRDSNPKYL).

The protein belongs to the bacterial ribosomal protein bL27 family.

The polypeptide is Large ribosomal subunit protein bL27 (Chlorobium luteolum (strain DSM 273 / BCRC 81028 / 2530) (Pelodictyon luteolum)).